A 351-amino-acid chain; its full sequence is Histidinol-phosphate aminotransferase (351 aa).

At Lys-214 the chain carries N6-(pyridoxal phosphate)lysine.

This sequence belongs to the class-II pyridoxal-phosphate-dependent aminotransferase family. Histidinol-phosphate aminotransferase subfamily. Pyridoxal 5'-phosphate serves as cofactor.

It carries out the reaction L-histidinol phosphate + 2-oxoglutarate = 3-(imidazol-4-yl)-2-oxopropyl phosphate + L-glutamate. It functions in the pathway amino-acid biosynthesis; L-histidine biosynthesis; L-histidine from 5-phospho-alpha-D-ribose 1-diphosphate: step 7/9. In Methanosphaerula palustris (strain ATCC BAA-1556 / DSM 19958 / E1-9c), this protein is Histidinol-phosphate aminotransferase.